Consider the following 275-residue polypeptide: Diaminopimelate epimerase (275 aa).

The substrate site is built by asparagine 12, glutamine 45, and asparagine 65. Cysteine 74 serves as the catalytic Proton donor. Substrate-binding positions include 75 to 76, asparagine 158, asparagine 191, and 209 to 210; these read GN and ER. Cysteine 218 (proton acceptor) is an active-site residue. 219–220 is a binding site for substrate; sequence GT.

This sequence belongs to the diaminopimelate epimerase family. In terms of assembly, homodimer.

It is found in the cytoplasm. The catalysed reaction is (2S,6S)-2,6-diaminopimelate = meso-2,6-diaminopimelate. Its pathway is amino-acid biosynthesis; L-lysine biosynthesis via DAP pathway; DL-2,6-diaminopimelate from LL-2,6-diaminopimelate: step 1/1. In terms of biological role, catalyzes the stereoinversion of LL-2,6-diaminopimelate (L,L-DAP) to meso-diaminopimelate (meso-DAP), a precursor of L-lysine and an essential component of the bacterial peptidoglycan. The sequence is that of Diaminopimelate epimerase from Shewanella denitrificans (strain OS217 / ATCC BAA-1090 / DSM 15013).